The sequence spans 85 residues: MKAVFAILFLAFIALTYAKSYDEVKEEIKNEVEREIFEDLEEESDELDNDVEEFNDAKPWRRWRRIRWRKIVPYIPAIVKAAGKK.

The first 18 residues, methionine 1–alanine 18, serve as a signal peptide directing secretion. Positions lysine 19–alanine 57 are excised as a propeptide. Residue alanine 82 is modified to Alanine amide.

The protein belongs to the arminin family. As to expression, expressed in entodermal epithelium along the body column.

It localises to the secreted. It is found in the target cell membrane. Functionally, antimicrobial peptide with a broad-spectrum antimicrobial activity. Keeps its antibacterial activity under a wide range of salt concentrations that mimic physiological conditions of human blood, which is surprising, since Hydra is an obligate freshwater animal with nearly no salt tolerance. Does not affect red blood cells. This Hydra oligactis (Brown hydra) protein is Arminin 524.